We begin with the raw amino-acid sequence, 106 residues long: MNDSEFHRLADQLWLTIEERLDDRDGDSDIDCEINGGVLTITFENGSKIIINRQEPLHQVWLATKQGGYHFDLKGDEWICDRSGETFWDLLEQAATQQAGETVSFR.

Belongs to the frataxin family.

Involved in iron-sulfur (Fe-S) cluster assembly. May act as a regulator of Fe-S biogenesis. The polypeptide is Iron-sulfur cluster assembly protein CyaY (Shigella flexneri).